Reading from the N-terminus, the 411-residue chain is Small ribosomal subunit protein bS1c (411 aa).

A chloroplast-targeting transit peptide spans 1–41; that stretch reads MASLAQQLAGGLRCPPLSNSNLSKPFSPKHTLKPRFSPIVS. 3 S1 motif domains span residues 96–166, 184–248, and 261–329; these read GSRV…LSLR, DVVV…MSNR, and GSVV…LSTK.

The protein belongs to the bacterial ribosomal protein bS1 family. Component of the chloroplast small ribosomal subunit (SSU). Mature 70S chloroplast ribosomes of higher plants consist of a small (30S) and a large (50S) subunit. The 30S small subunit contains 1 molecule of ribosomal RNA (16S rRNA) and 24 different proteins. The 50S large subunit contains 3 rRNA molecules (23S, 5S and 4.5S rRNA) and 33 different proteins.

The protein localises to the plastid. It is found in the chloroplast. In terms of biological role, component of the chloroplast ribosome (chloro-ribosome), a dedicated translation machinery responsible for the synthesis of chloroplast genome-encoded proteins, including proteins of the transcription and translation machinery and components of the photosynthetic apparatus. Actively engaged in the initiation complex formation via a strong mRNA-binding activity. Possesses a poly(A)-binding activity which might play a role as a control element in chloroplast mRNA translation. This chain is Small ribosomal subunit protein bS1c (RPS1), found in Spinacia oleracea (Spinach).